Reading from the N-terminus, the 421-residue chain is Proton/sodium-glutamate symport protein (421 aa).

Over 1–3 the chain is Cytoplasmic; sequence MRK. The chain crosses the membrane as a helical span at residues 4-24; sequence IGLAWQIFIGLILGIIVGAIF. Topologically, residues 25–43 are extracellular; that stretch reads YGNPKVAAYLQPIGDIFLR. Residues 44–64 form a helical membrane-spanning segment; it reads LIKMIVIPIVISSLVVGVASV. The Cytoplasmic portion of the chain corresponds to 65–77; the sequence is GDLKKLGKLGGKT. A helical membrane pass occupies residues 78 to 98; sequence IIYFEIITTIAIVVGLLAANI. The Extracellular segment spans residues 99–148; the sequence is FQPGAGVNMKSLEKTDIQSYVDTTNEVQHHSMVETFVNIVPKNIFESLST. The chain crosses the membrane as a helical span at residues 149–169; that stretch reads GDMLPIIFFSVMFGLGVAAIG. Residues 170–198 lie on the Cytoplasmic side of the membrane; it reads EKGKPVLQFFQGTAEAMFYVTNQIMKFAP. A helical membrane pass occupies residues 199 to 219; it reads FGVFALIGVTVSKFGVESLIP. The Extracellular segment spans residues 220-222; sequence LSK. A helical membrane pass occupies residues 223 to 243; sequence LVIVVYATMLFFIFAVLGGVA. Lys244 is a topological domain (cytoplasmic). The chain crosses the membrane as a helical span at residues 245 to 265; sequence LFGINIFHIIKILKDELILAY. Residues 266 to 306 lie on the Extracellular side of the membrane; it reads STASSETVLPRIMDKMEKFGCPKAITSFVIPTGYSFNLDGS. The helical transmembrane segment at 307–327 threads the bilayer; sequence TLYQALAAIFIAQLYGIDMSV. At 328-330 the chain is on the cytoplasmic side; the sequence is SQQ. 2 helical membrane passes run 331–351 and 352–372; these read ISLLLVLMVTSKGIAGVPGVS and FVVLLATLGTVGIPVEGLAFI. The Cytoplasmic segment spans residues 373–421; sequence AGIDRILDMARTAVNVIGNSLAAIIMSKWEGQYNEEKGKQYLAELQQSA.

It belongs to the dicarboxylate/amino acid:cation symporter (DAACS) (TC 2.A.23) family. In terms of assembly, homotrimer.

It is found in the cell membrane. In terms of biological role, this carrier protein is part of the Na(+)-dependent, binding-protein-independent glutamate-aspartate transport system. In Bacillus caldotenax, this protein is Proton/sodium-glutamate symport protein (gltT).